The following is a 141-amino-acid chain: Large ribosomal subunit protein bL17 (141 aa).

Belongs to the bacterial ribosomal protein bL17 family. As to quaternary structure, part of the 50S ribosomal subunit. Contacts protein L32.

The chain is Large ribosomal subunit protein bL17 from Sinorhizobium fredii (strain NBRC 101917 / NGR234).